Reading from the N-terminus, the 354-residue chain is MGFPRIISKNNKIYTKLGAFCLSGDGQQFWIVCHTCQEELQTQDKFWKHIQDEHNFMHGPKQEQGRTAAQAYMEAAEAAAMTPLPLYRKVSENDQQRDDVVSTEDEDMQKEPKDYTEMRAHDDQQQTAAVAIDIKLEPSSLSQQSAVQAQQQQQQQQQQQQQQQQQQQQQEQLQQQQQQQQTQQIEITTPLMYQIPQVHPPVSAYAALVQAPAINTLNMSVAAAAAAVASNQVPSTMANLLPQELQYKQELQYKQEVQQHKESTNNSTTASASSAMSSDDGERFYICDFENCGLKFKYHSRLELHRSVHSKVRRFACEICGASFKQSCNLSTHRKKKHALKGTTKATLVPSQSF.

The segment at 31 to 54 (IVCHTCQEELQTQDKFWKHIQDEH) adopts a C2H2-type 1 zinc-finger fold. Disordered stretches follow at residues 84-124 (LPLY…HDDQ) and 256-276 (EVQQ…SSAM). 2 stretches are compositionally biased toward basic and acidic residues: residues 89 to 100 (KVSENDQQRDDV) and 109 to 124 (QKEP…HDDQ). The segment covering 264–276 (TNNSTTASASSAM) has biased composition (low complexity). 2 C2H2-type zinc fingers span residues 285–309 (YICD…RSVH) and 315–338 (FACE…KKKH).

Homooctamer. As to expression, fat body.

It localises to the nucleus. May be a transcription factor for genes having (A+T) stretches in their promoter and/or enhancer regions. Binds to AT rich DNA. This is AT-rich binding protein from Sarcophaga peregrina (Flesh fly).